The chain runs to 193 residues: Bifunctional protein PyrR (193 aa).

Residues 48–49, Arg89, Arg93, 110–118, Arg143, and Val167 each bind substrate; these read TR and DDVLFSGRT. The short motif at 106 to 118 is the PRPP-binding element; the sequence is VVLVDDVLFSGRT.

The protein belongs to the purine/pyrimidine phosphoribosyltransferase family. PyrR subfamily.

It catalyses the reaction UMP + diphosphate = 5-phospho-alpha-D-ribose 1-diphosphate + uracil. Functionally, regulates the transcription of the pyrimidine nucleotide (pyr) operon in response to exogenous pyrimidines. Its function is as follows. Also displays a weak uracil phosphoribosyltransferase activity which is not physiologically significant. In Streptomyces coelicolor (strain ATCC BAA-471 / A3(2) / M145), this protein is Bifunctional protein PyrR.